Reading from the N-terminus, the 195-residue chain is Recombination protein RecR (195 aa).

The segment at 53-68 adopts a C4-type zinc-finger fold; it reads CPVCFNIDVKSPCSIC. One can recognise a Toprim domain in the interval 76-171; the sequence is QLLCIVEELG…KVTRLACGIP (96 aa).

Belongs to the RecR family.

May play a role in DNA repair. It seems to be involved in an RecBC-independent recombinational process of DNA repair. It may act with RecF and RecO. The sequence is that of Recombination protein RecR from Ehrlichia chaffeensis (strain ATCC CRL-10679 / Arkansas).